Consider the following 302-residue polypeptide: Ribonucleoside-diphosphate reductase small subunit (302 aa).

Fe cation-binding residues include E61, E91, and H94. Y98 is a catalytic residue. A helical transmembrane segment spans residues 147-167; it reads ILVFLLIEGIFFISSFYSIAL. Fe cation is bound by residues E154, E188, and H191.

Belongs to the ribonucleoside diphosphate reductase small chain family. Heterotetramer composed of a homodimer of the large subunit (R1) and a homodimer of the small subunit (R2). Larger multisubunit protein complex are also active, composed of (R1)n(R2)n. Requires Fe cation as cofactor.

It is found in the host membrane. It catalyses the reaction a 2'-deoxyribonucleoside 5'-diphosphate + [thioredoxin]-disulfide + H2O = a ribonucleoside 5'-diphosphate + [thioredoxin]-dithiol. In terms of biological role, ribonucleoside-diphosphate reductase holoenzyme provides the precursors necessary for viral DNA synthesis. Allows virus growth in non-dividing cells, as well as reactivation from latency in infected hosts. Catalyzes the biosynthesis of deoxyribonucleotides from the corresponding ribonucleotides. The sequence is that of Ribonucleoside-diphosphate reductase small subunit from Homo sapiens (Human).